A 1125-amino-acid chain; its full sequence is Transient receptor potential cation channel subfamily A member 1 (1125 aa).

Over 1 to 721 (MKRSLRRVLR…KWCAYGFRAH (721 aa)) the chain is Cytoplasmic. ANK repeat units follow at residues 63-94 (ENLC…ALNV), 98-127 (YGNT…NPNL), 131-161 (NMMA…NINL), 165-194 (NGNT…KLCK), 198-227 (WGDY…KTGY), 239-268 (KKAS…HIDM), 272-301 (AKCM…GSSD), 309-338 (NQET…DINS), and 342-371 (EGRS…KVDI). 5 disulfide bridges follow: Cys-193/Cys-666, Cys-463/Cys-666, Cys-609/Cys-622, Cys-622/Cys-666, and Cys-634/Cys-859. At Pro-395 the chain carries 4-hydroxyproline; transient. ANK repeat units lie at residues 413 to 442 (DGCT…SVHS), 446 to 475 (DKKS…DTRL), 482 to 511 (HGMT…LFLS), 514 to 543 (NGWT…KCTD), and 548 to 577 (EGNT…DILL). Cys-415 and Cys-422 together coordinate (E)-cinnamaldehyde. Cys-622 serves as a coordination point for (E)-cinnamaldehyde. Residue Cys-634 is modified to Cysteine sulfenic acid (-SOH); transient; in hyperoxia. (E)-cinnamaldehyde is bound by residues Cys-642, Cys-666, and Lys-712. A helical membrane pass occupies residues 722-742 (MMNLGSYCLGLIPMTLLVVKI). The Extracellular portion of the chain corresponds to 743 to 767 (QPGMAFNSTGIINETISTHEERINT). N-linked (GlcNAc...) asparagine glycans are attached at residues Asn-749 and Asn-755. A helical transmembrane segment spans residues 768-788 (LNSFPLKICMILVFLSSIFGY). Residues 789–806 (CKEVVQIFQQKRNYFLDY) lie on the Cytoplasmic side of the membrane. Residues Glu-791, Gln-794, Asn-808, and Glu-811 each coordinate Ca(2+). Residues 807–827 (NNALEWVIYTTSMIFVLPLFL) form a helical membrane-spanning segment. Over 828-832 (DIPAY) the chain is Extracellular. Residues 833–853 (MQWQCGAIAIFFYWMNFLLYL) form a helical membrane-spanning segment. The Cytoplasmic segment spans residues 854–876 (QRFENCGIFIVMLEVIFKTLLRS). A Cysteine sulfenic acid (-SOH); transient; in hyperoxia modification is found at Cys-859. The chain crosses the membrane as a helical span at residues 877-897 (TGVFIFLLLAFGLSFYVLLNF). At 898 to 904 (QDAFSTP) the chain is on the extracellular side. The pore-forming intramembrane region spans 905-925 (LLSLIQTFSMMLGDINYRDAF). The Extracellular portion of the chain corresponds to 926-937 (LEPLFRNELAYP). A helical membrane pass occupies residues 938–959 (VLTFGQLIAFTMFVPIVLMNLL). The Cytoplasmic portion of the chain corresponds to 960–1125 (IGLAVGDIAE…THCSISHPDI (166 aa)). A coiled-coil region spans residues 1044-1073 (MEILKQKYRLKDLTSLLEKQHELIKLIIQK). 1048 to 1054 (KQKYRLK) provides a ligand contact to a 1,2-diacyl-sn-glycero-3-phospho-(1D-myo-inositol).

This sequence belongs to the transient receptor (TC 1.A.4) family. As to quaternary structure, homotetramer. Interacts with TMEM100. Interacts with EGLN1. Interacts with the scorpion wasabi receptor toxin at the same site that electrophiles but in a non-covalent manner. Post-translationally, TRPA1 activation by electrophiles occurs though covalent modification of specific cysteine residues in the N-terminal cytoplasmic domain. Hydroxylation is required for TRPA1 activity inhibition in normoxia. In hypoxia, the decrease in oxygen concentration diminishes the activity of the hydroxylase EGLN1, thus relieving TRPA1 from inhibition and ultimately leading to channel activation. In terms of processing, oxidation of Cys-634 and Cys-859 in hyperoxia may override the hydroxylase EGLN1-mediated inhibition, causing TRPA1 activation. As to expression, specifically expressed in a subset of nociceptive neurons. Expressed in dorsal root ganglia.

It localises to the cell membrane. It catalyses the reaction Ca(2+)(in) = Ca(2+)(out). It carries out the reaction Mg(2+)(in) = Mg(2+)(out). The catalysed reaction is Na(+)(in) = Na(+)(out). The enzyme catalyses K(+)(in) = K(+)(out). It catalyses the reaction Zn(2+)(in) = Zn(2+)(out). Electrophilic ligands activate the channel by covalent modification of intracellular cysteines; Cys-622 plays a key role in covalent binding of electrophiles. Extracellular Ca(2+) both potentiates and inactivates TRPA1; a rapid potentiation follows by slow desensitization. Activated by increase in intracellular Ca(2+) concentration. Inhibited by ruthenium red, a potent blocker of TRPV channels and selectively by A-967079. Activated by benzyl isothiocyanate (BITC), iodoacetamide, sulfhydryl reactive agent MTSEA, N-methyl maleimide (NMM), N-ethylmaleimide (NEM), and 2-aminoethyldiphenylborinate (2-APB). Also activated by hyperoxia. Acivated by intracellular Zn(2+). TRPA1 activation may critically depend on the presence of small intracellular compounds such as polyphosphates. In terms of biological role, ligand-activated Ca(2+)-permeable, nonselective cation channel. Involved in pain detection and possibly also in cold perception, oxygen concentration perception, cough, itch, and inner ear function. Has a relatively high Ca(2+) selectivity, with a preference for divalent over monovalent cations (Ca(2+) &gt; Ba(2+) &gt; Mg(2+) &gt; NH4(+) &gt; Li(+) &gt; K(+)), the influx of cation into the cytoplasm, leads to membrane depolarization. Has a central role in the pain response to endogenous inflammatory mediators, such as bradykinin and to a diverse array of irritants. Activated by a large variety of structurally unrelated electrophilic and non-electrophilic chemical compounds, such as allylthiocyanate (AITC) from mustard oil or wasabi, cinnamaldehyde, diallyl disulfide (DADS) from garlic, and acrolein, an environmental irritant. Electrophilic ligands activate TRPA1 by interacting with critical N-terminal Cys residues in a covalent manner. Non-electrophile agonists bind at distinct sites in the transmembrane domain to promote channel activation. Also acts as an ionotropic cannabinoid receptor by being activated by delta(9)-tetrahydrocannabinol (THC), the psychoactive component of marijuana. May be a component for the mechanosensitive transduction channel of hair cells in inner ear, thereby participating in the perception of sounds. In Rattus norvegicus (Rat), this protein is Transient receptor potential cation channel subfamily A member 1.